The sequence spans 319 residues: Thioredoxin reductase (319 aa).

37 to 44 (ERGVPGGQ) lines the FAD pocket. Cysteine 136 and cysteine 139 are oxidised to a cystine. FAD is bound at residue 279–288 (DVRAKSLRQI).

This sequence belongs to the class-II pyridine nucleotide-disulfide oxidoreductase family. As to quaternary structure, homodimer. Requires FAD as cofactor.

It is found in the cytoplasm. It catalyses the reaction [thioredoxin]-dithiol + NADP(+) = [thioredoxin]-disulfide + NADPH + H(+). The sequence is that of Thioredoxin reductase (trxB) from Listeria monocytogenes serovar 1/2a (strain ATCC BAA-679 / EGD-e).